A 607-amino-acid chain; its full sequence is Ceramide kinase (607 aa).

A DAGKc domain is found at 135–358 (DRPKSLMVFV…LDIAQVVRWK (224 aa)). Residues 145 to 149 (HPLCG), Thr176, and 205 to 211 (GDGLFNE) contribute to the ATP site. Residue 204-207 (GGDG) participates in substrate binding. The active-site Proton donor/acceptor is Asp206. The tract at residues 247–297 (NDLSNSELTGDDANAISGSSNTPDDHEPLLSTTRSTGLDISSSDSSDEPCN) is disordered. A compositionally biased stretch (polar residues) spans 276-286 (LSTTRSTGLDI). Residue Ser320 participates in ATP binding. A CXXXCXXC motif is present at residues 454–461 (CRTNCLIC).

Ca(2+) is required as a cofactor. Mg(2+) serves as cofactor. As to expression, highly expressed in leaves and at lower levels in stems.

It carries out the reaction an N-acylsphing-4-enine + ATP = an N-acylsphing-4-enine 1-phosphate + ADP + H(+). Functionally, catalyzes specifically the phosphorylation of ceramide to form ceramide 1-phosphate. Possesses activity on ceramide analog (C6 synthetic ceramide) in vitro. Ceramide is a critical sphingolipid metabolite that induces programmed cell death (PCD) in plants and ceramide-1-phosphate has a PCD suppressive effect. Thus, ceramide phosphorylation plays a role in the modulation of PCD and CERK activity is crucial for the maintenance of cell viability. In Oryza sativa subsp. japonica (Rice), this protein is Ceramide kinase (CERK).